Reading from the N-terminus, the 312-residue chain is tRNA pseudouridine synthase B (312 aa).

Asp-46 acts as the Nucleophile in catalysis. Positions 74, 177, and 198 each coordinate substrate.

It belongs to the pseudouridine synthase TruB family. Type 1 subfamily.

It carries out the reaction uridine(55) in tRNA = pseudouridine(55) in tRNA. Responsible for synthesis of pseudouridine from uracil-55 in the psi GC loop of transfer RNAs. The polypeptide is tRNA pseudouridine synthase B (Buchnera aphidicola subsp. Acyrthosiphon pisum (strain APS) (Acyrthosiphon pisum symbiotic bacterium)).